Consider the following 764-residue polypeptide: Serine/threonine-protein kinase MPS1 (764 aa).

Disordered regions lie at residues 66–95, 197–216, and 258–316; these read EEMDRSSSRSHPPPSMGNLTSGHTSTSSHS, ELPLEDSHQTNFKETKRNTD, and QAAL…KSSI. Positions 85–95 are enriched in low complexity; it reads TSGHTSTSSHS. Positions 201–216 are enriched in basic and acidic residues; the sequence is EDSHQTNFKETKRNTD. Composition is skewed to low complexity over residues 272–292 and 306–315; these read KSRSSSSSLSSNNLLANKDNS and STGSSSSKSS. Positions 440–720 constitute a Protein kinase domain; that stretch reads YEKIELLGRG…LSSTFLQPFM (281 aa). Residues 446 to 454 and K468 contribute to the ATP site; that span reads LGRGGSSRV. The Proton acceptor role is filled by D563.

The protein belongs to the protein kinase superfamily. Ser/Thr protein kinase family. Post-translationally, autophosphorylated.

It catalyses the reaction L-seryl-[protein] + ATP = O-phospho-L-seryl-[protein] + ADP + H(+). The enzyme catalyses L-threonyl-[protein] + ATP = O-phospho-L-threonyl-[protein] + ADP + H(+). It carries out the reaction L-tyrosyl-[protein] + ATP = O-phospho-L-tyrosyl-[protein] + ADP + H(+). In terms of biological role, involved in mitotic spindle assembly checkpoint signaling, a process that delays anaphase until chromosomes are bioriented on the spindle, and in the repair of incorrect mitotic kinetochore-spindle microtubule attachments. Phosphorylates SPC105 on MELT motifs; phosphorylation is required for recruitment of the BUB1-BUB3 complex to kinetochores. Phosphorylates CNN1, which contributes to the enrichment of CNN1 on anaphase kinetochores. Implicated in spindle pole body (SPD) duplication. Phosphorylates the SPC29 and SPC110 spindle pole body components. The chain is Serine/threonine-protein kinase MPS1 (MPS1) from Saccharomyces cerevisiae (strain ATCC 204508 / S288c) (Baker's yeast).